The chain runs to 165 residues: Small ribosomal subunit protein uS5 (165 aa).

Residues 10-73 (LVEKLVSVDR…EAAKRNMITV (64 aa)) form the S5 DRBM domain.

Belongs to the universal ribosomal protein uS5 family. In terms of assembly, part of the 30S ribosomal subunit. Contacts proteins S4 and S8.

In terms of biological role, with S4 and S12 plays an important role in translational accuracy. Located at the back of the 30S subunit body where it stabilizes the conformation of the head with respect to the body. The protein is Small ribosomal subunit protein uS5 of Psychrobacter sp. (strain PRwf-1).